Reading from the N-terminus, the 172-residue chain is Adenine phosphoribosyltransferase (172 aa).

The protein belongs to the purine/pyrimidine phosphoribosyltransferase family. In terms of assembly, homodimer.

The protein resides in the cytoplasm. The catalysed reaction is AMP + diphosphate = 5-phospho-alpha-D-ribose 1-diphosphate + adenine. It participates in purine metabolism; AMP biosynthesis via salvage pathway; AMP from adenine: step 1/1. Catalyzes a salvage reaction resulting in the formation of AMP, that is energically less costly than de novo synthesis. This Lactiplantibacillus plantarum (strain ATCC BAA-793 / NCIMB 8826 / WCFS1) (Lactobacillus plantarum) protein is Adenine phosphoribosyltransferase.